We begin with the raw amino-acid sequence, 315 residues long: DNA-directed RNA polymerase subunit alpha (315 aa).

The tract at residues 1-228 is alpha N-terminal domain (alpha-NTD); that stretch reads MAQFQIECVE…DLFNPLKDIS (228 aa). An alpha C-terminal domain (alpha-CTD) region spans residues 238–315; it reads IPDDPTAQIP…LPQERSSKHS (78 aa).

This sequence belongs to the RNA polymerase alpha chain family. As to quaternary structure, in cyanobacteria the RNAP catalytic core is composed of 2 alpha, 1 beta, 1 beta', 1 gamma and 1 omega subunit. When a sigma factor is associated with the core the holoenzyme is formed, which can initiate transcription.

It carries out the reaction RNA(n) + a ribonucleoside 5'-triphosphate = RNA(n+1) + diphosphate. Its function is as follows. DNA-dependent RNA polymerase catalyzes the transcription of DNA into RNA using the four ribonucleoside triphosphates as substrates. The polypeptide is DNA-directed RNA polymerase subunit alpha (Trichormus variabilis (strain ATCC 29413 / PCC 7937) (Anabaena variabilis)).